A 210-amino-acid chain; its full sequence is Large ribosomal subunit protein bL17 (210 aa).

The segment at 177–210 is disordered; it reads TRSAQRPAFEQDAPESDSAPEAEAKTEEETASAN.

The protein belongs to the bacterial ribosomal protein bL17 family. As to quaternary structure, part of the 50S ribosomal subunit. Contacts protein L32.

The chain is Large ribosomal subunit protein bL17 from Rhodopirellula baltica (strain DSM 10527 / NCIMB 13988 / SH1).